A 1454-amino-acid chain; its full sequence is Serine/threonine-protein kinase VPS15 (1454 aa).

A lipid anchor (N-myristoyl glycine) is attached at G2. Residues 27-300 (VHYVSQLNSS…LLNKYRGIFF (274 aa)) enclose the Protein kinase domain. ATP contacts are provided by residues 33-41 (LNSSRFLKT) and K54. D147 acts as the Proton acceptor in catalysis. HEAT repeat units lie at residues 460-497 (NKID…SVRK), 576-613 (KLIQ…FFGR), 615-652 (RTND…LLGT), and 654-691 (TLEQ…TGLI). 6 WD repeats span residues 1078-1118 (NEPN…VGEV), 1126-1165 (DCSS…QESE), 1229-1268 (PRHG…LIRS), 1275-1315 (APIT…CQYA), 1344-1382 (RSLN…SSKA), and 1422-1454 (YHHD…GIFQ).

It belongs to the protein kinase superfamily. Ser/Thr protein kinase family. As to quaternary structure, component of the autophagy-specific VPS34 PI3-kinase complex I composed of VPS15, VPS30, VPS34, ATG14 and ATG38; and of the VPS34 PI3-kinase complex II composed of VPS15, VPS30, VPS34 and VPS38. Interacts directly with ATG14 and GPA1. Interacts directly with VPS34. In terms of processing, autophosphorylated.

It localises to the golgi apparatus. The protein localises to the trans-Golgi network membrane. It is found in the endosome membrane. The catalysed reaction is L-seryl-[protein] + ATP = O-phospho-L-seryl-[protein] + ADP + H(+). It catalyses the reaction L-threonyl-[protein] + ATP = O-phospho-L-threonyl-[protein] + ADP + H(+). Functionally, serine/threonine-protein kinase required for cytoplasm to vacuole transport (Cvt) and autophagy as a part of the autophagy-specific VPS34 PI3-kinase complex I. This complex is essential to recruit the ATG8-phosphatidylinositol conjugate and the ATG12-ATG5 conjugate to the pre-autophagosomal structure. Is also involved in endosome-to-Golgi retrograde transport as part of the VPS34 PI3-kinase complex II. This second complex is required for the endosome-to-Golgi retrieval of PEP1 and KEX2, and the recruitment of VPS5 and VPS7, two components of the retromer complex, to endosomal membranes (probably through the synthesis of a specific pool of phosphatidylinositol 3-phosphate recruiting the retromer to the endosomes). By regulating VPS34 kinase activity, VPS15 appears to be essential for the efficient delivery of soluble hydrolases to the yeast vacuole. May function as a G protein beta subunit to propagate the pheromone response at the endosome with GPA1. In Saccharomyces cerevisiae (strain ATCC 204508 / S288c) (Baker's yeast), this protein is Serine/threonine-protein kinase VPS15.